The sequence spans 202 residues: Nigerythrin (202 aa).

The 146-residue stretch at 23–168 folds into the Ferritin-like diiron domain; the sequence is KTAVGSTLEN…AYNDIDAPDD (146 aa). Fe cation is bound by residues Glu40, Glu73, Glu115, Glu118, Glu149, His152, Cys174, Cys177, Cys189, and Cys192. The Rubredoxin-like domain maps to 169 to 202; sequence DKFHLCPICGYIHKGEDFEKCPICFRPKDTFTAY.

Homodimer. May possess two rubredoxin-like centers and two hemerythrin-like binuclear-iron centers per dimer.

It is found in the cytoplasm. In terms of biological role, exhibits NADH peroxidase activity (in vitro). The chain is Nigerythrin (ngr) from Nitratidesulfovibrio vulgaris (strain ATCC 29579 / DSM 644 / CCUG 34227 / NCIMB 8303 / VKM B-1760 / Hildenborough) (Desulfovibrio vulgaris).